The sequence spans 202 residues: Small ribosomal subunit protein uS2 (202 aa).

Belongs to the universal ribosomal protein uS2 family.

The sequence is that of Small ribosomal subunit protein uS2 (rps2) from Pyrococcus horikoshii (strain ATCC 700860 / DSM 12428 / JCM 9974 / NBRC 100139 / OT-3).